A 286-amino-acid chain; its full sequence is Polyamine aminopropyltransferase (286 aa).

A PABS domain is found at 5–242 (DNWFTEVLEE…GWWSATLASK (238 aa)). Gln-35 is an S-methyl-5'-thioadenosine binding site. Spermidine contacts are provided by His-66 and Asp-90. Residues Asp-110 and 141–142 (DG) each bind S-methyl-5'-thioadenosine. The active-site Proton acceptor is Asp-160. Spermidine is bound at residue 160–163 (DSTD).

It belongs to the spermidine/spermine synthase family. In terms of assembly, homodimer or homotetramer.

The protein localises to the cytoplasm. The enzyme catalyses S-adenosyl 3-(methylsulfanyl)propylamine + putrescine = S-methyl-5'-thioadenosine + spermidine + H(+). Its pathway is amine and polyamine biosynthesis; spermidine biosynthesis; spermidine from putrescine: step 1/1. In terms of biological role, catalyzes the irreversible transfer of a propylamine group from the amino donor S-adenosylmethioninamine (decarboxy-AdoMet) to putrescine (1,4-diaminobutane) to yield spermidine. This chain is Polyamine aminopropyltransferase, found in Alkalilimnicola ehrlichii (strain ATCC BAA-1101 / DSM 17681 / MLHE-1).